The chain runs to 113 residues: UPF0122 protein PEPE_0845 (113 aa).

It belongs to the UPF0122 family.

Its function is as follows. Might take part in the signal recognition particle (SRP) pathway. This is inferred from the conservation of its genetic proximity to ftsY/ffh. May be a regulatory protein. The sequence is that of UPF0122 protein PEPE_0845 from Pediococcus pentosaceus (strain ATCC 25745 / CCUG 21536 / LMG 10740 / 183-1w).